Reading from the N-terminus, the 600-residue chain is Proton channel OTOP1 (600 aa).

The disordered stretch occupies residues 1–50 (MPGGPGAPSSPAASSGSSRAAPSGIAACPLSPPPLARGSPQASGPRRGAS). Residues 1–56 (MPGGPGAPSSPAASSGSSRAAPSGIAACPLSPPPLARGSPQASGPRRGASVPQKLA) are Cytoplasmic-facing. Low complexity predominate over residues 7–27 (APSSPAASSGSSRAAPSGIAA). Residues 57-78 (ETLSSQYGLNVFVAGLLFLLAW) traverse the membrane as a helical segment. Residues 79–86 (AVHATGVG) are Extracellular-facing. A helical transmembrane segment spans residues 87–110 (KSDLLCVLTALMLLQLLWMLWYVG). The Cytoplasmic segment spans residues 111 to 128 (RSYMQRRLIRPKDTHAGA). Residues 129–151 (RWLRGSITLFAFITVVLGCLKVA) form a helical membrane-spanning segment. Over 152-161 (YFIGFSECLS) the chain is Extracellular. Residues 162 to 186 (ATEGVFPVTHAVHTLLQVYFLWGHA) traverse the membrane as a helical segment. Residues 187 to 194 (KDIIMSFK) are Cytoplasmic-facing. A helical membrane pass occupies residues 195–217 (TLERFGVIHSVFTNLLLWANSVL). Residues 218 to 262 (NESKHQLNEHKERLITLGFGNITIVLDDHTPQCNCTPPALCSALS) are Extracellular-facing. The helical transmembrane segment at 263-288 (HGIYYLYPFNIEYQILASTMLYVLWK) threads the bilayer. The Cytoplasmic segment spans residues 289–309 (NIGRRVDSSQHQKMQCRFDGV). The helical transmembrane segment at 310-332 (LVGSVLGLTVLAATIAVVVVYMI) threads the bilayer. Topologically, residues 333–342 (HIGRSKSKSE) are extracellular. The chain crosses the membrane as a helical span at residues 343-368 (SALIMFYLYAITVLLLMGAAGLVGSW). Over 369–386 (IYRVDEKSLDESKNPARK) the chain is Cytoplasmic. The chain crosses the membrane as a helical span at residues 387–411 (LDVDLLVATGSGSWLLSWGSILAIA). Residues 412-421 (CAETRPPYTW) lie on the Extracellular side of the membrane. A helical transmembrane segment spans residues 422-442 (YNLPYSVLVIVEKYVQNIFII). Topologically, residues 443–532 (ESVHLEPEGV…QGGMKRRLLR (90 aa)) are cytoplasmic. A helical transmembrane segment spans residues 533–551 (NITAFLFLCNISLWIPPAF). Residues 552 to 569 (GCRPEYDNGLEEIVFGFE) lie on the Extracellular side of the membrane. The chain crosses the membrane as a helical span at residues 570–593 (PWIIVVNLAMPFSIFYRMHAAAAL). At 594 to 600 (FEVYCKI) the chain is on the cytoplasmic side.

This sequence belongs to the otopetrin family. As to quaternary structure, homodimer. Interacts with STAT1, independently of STAT1 phosphorylation status. Expressed in thymus, heart, kidney, skin, vestibular system of the inner ear, sour taste cells, heart, uterus, dorsal root ganglion, adrenal gland, lactating mammary gland and stimulated mast cells. In the inner ear, expressed in the supporting cells in extrastriolar regions of the saccule and in the utricle, but not in the cochlea. Expressed in brown adipose tissue. Expressed in epididymal white adipose tissue (eWAT), as well as in inguinal fat, in obese animals, but hardly detectable in eWAT from lean mice. Expressed in acid-sensing taste receptor cells (PKD2L1-positive cells), but not in other types of taste cells (at protein level).

The protein resides in the cell membrane. The protein localises to the cell projection. It localises to the microvillus. It carries out the reaction H(+)(in) = H(+)(out). Its activity is regulated as follows. Activated by both acid and alkali, with proton influx in response to extracellular acid and proton efflux during alkali stimulation. Inhibited by Zn(2+); this inhibition is thought to be pH-sensitive. Currents evoked in response to mild acid (pH 6.0) stimulus may also be mildly potentiated by exposure to Zn(2+). Activated by NH(4)Cl. In terms of biological role, proton-selective ion channel. Biphasically modulated by acid and alkali, mediating proton influx and efflux in response to extracellular acid and base stimulation, respectively. Sour taste receptor, which carries inward currents in response to extracellular acidification. Sensor for ammonium chloride (NH(4)Cl) in taste receptor cells. NH(4)Cl acts by increasing the intracellular pH, thereby generating a driving force for proton entry through OTOP1 channel. Might also participate in alkaline sensation. Plays a role in the regulation of Ca(2+) flux in response to purigenic (ATP, ADP and UDP) stimuli, leading to increase in cytosolic Ca(2+) due to influx of extracellular calcium. May play this role by inhibiting P2Y purinoceptor-mediated Ca(2+) release in a Ca(2+)-dependent manner and promote an influx of Ca(2+) in response to ATP. Through this mechanism and possibly others, plays a role in the formation and function of calcium carbonate-based structures in the vestibular system of the inner ear, called otoconia, that sense gravity and linear acceleration. In obesity, may attenuate adipose tissue inflammation, through the negative regulation of IFNG signaling, hence may play an adaptive role in the maintainance of metabolic homeostasis. Following alkali activation, may also be permeable Na(+), K(+), Cs(+) and Li(+). This Mus musculus (Mouse) protein is Proton channel OTOP1.